The primary structure comprises 156 residues: Ribosomal RNA large subunit methyltransferase H (156 aa).

Residues L73, G104, and 123-128 (LGALTL) each bind S-adenosyl-L-methionine.

It belongs to the RNA methyltransferase RlmH family. As to quaternary structure, homodimer.

It localises to the cytoplasm. It catalyses the reaction pseudouridine(1915) in 23S rRNA + S-adenosyl-L-methionine = N(3)-methylpseudouridine(1915) in 23S rRNA + S-adenosyl-L-homocysteine + H(+). In terms of biological role, specifically methylates the pseudouridine at position 1915 (m3Psi1915) in 23S rRNA. In Dichelobacter nodosus (strain VCS1703A), this protein is Ribosomal RNA large subunit methyltransferase H.